Reading from the N-terminus, the 498-residue chain is Galactose-1-phosphate uridylyltransferase (498 aa).

Belongs to the galactose-1-phosphate uridylyltransferase type 2 family.

Its subcellular location is the cytoplasm. It catalyses the reaction alpha-D-galactose 1-phosphate + UDP-alpha-D-glucose = alpha-D-glucose 1-phosphate + UDP-alpha-D-galactose. It functions in the pathway carbohydrate metabolism; galactose metabolism. This is Galactose-1-phosphate uridylyltransferase from Staphylococcus carnosus (strain TM300).